Here is a 251-residue protein sequence, read N- to C-terminus: Hydroxyacylglutathione hydrolase (251 aa).

Residues H53, H55, D57, H58, H110, D127, and H165 each coordinate Zn(2+).

Belongs to the metallo-beta-lactamase superfamily. Glyoxalase II family. In terms of assembly, monomer. The cofactor is Zn(2+).

It catalyses the reaction an S-(2-hydroxyacyl)glutathione + H2O = a 2-hydroxy carboxylate + glutathione + H(+). The protein operates within secondary metabolite metabolism; methylglyoxal degradation; (R)-lactate from methylglyoxal: step 2/2. Functionally, thiolesterase that catalyzes the hydrolysis of S-D-lactoyl-glutathione to form glutathione and D-lactic acid. This Escherichia coli (strain 55989 / EAEC) protein is Hydroxyacylglutathione hydrolase.